Consider the following 365-residue polypeptide: MPEITVRAKSKTYPVYINEFALTDVKEQWTKSLAKYSHVFVLTDEHVANLHKAKLDAVLADLPVVTYYVAPNGEEAKTFRVYEDVMTKMIETGLDRKAVLIAFGGGVIGDLGGFVAATYMRGIPFYQVPTTVLAHDSAVGGKVAINHPLGKNMIGNFYQPEAVIYDTQFFATLPEREMRSGFAEMIKHALISDHALLTALMDTFTEPKDFYTKDLTPFLQRGIEIKANIVAQDETEQGVRAYLNFGHTFGHALEAYGNFGKWLHGEAITYGMIYALTMSETVYGLDFDLAKFTTWLERLGYNTTFDVTVPFSNILDNMRHDKKTTFNEISMVLLEDIGKPVIFKAEDELIFDTYKSVMRNGGDLF.

NAD(+)-binding positions include 106-110 (GVIGD), 130-131 (TT), K142, K151, and 169-172 (FFAT). Residues E184, H247, and H264 each contribute to the Zn(2+) site.

Belongs to the sugar phosphate cyclases superfamily. Dehydroquinate synthase family. Requires NAD(+) as cofactor. The cofactor is Co(2+). It depends on Zn(2+) as a cofactor.

Its subcellular location is the cytoplasm. The catalysed reaction is 7-phospho-2-dehydro-3-deoxy-D-arabino-heptonate = 3-dehydroquinate + phosphate. The protein operates within metabolic intermediate biosynthesis; chorismate biosynthesis; chorismate from D-erythrose 4-phosphate and phosphoenolpyruvate: step 2/7. In terms of biological role, catalyzes the conversion of 3-deoxy-D-arabino-heptulosonate 7-phosphate (DAHP) to dehydroquinate (DHQ). The polypeptide is 3-dehydroquinate synthase (Listeria innocua serovar 6a (strain ATCC BAA-680 / CLIP 11262)).